The primary structure comprises 484 residues: Tribbles (484 aa).

Residues 1–23 are compositionally biased toward polar residues; that stretch reads MDNSSGQNSRTASSASTSKIVNY. The interval 1–51 is disordered; the sequence is MDNSSGQNSRTASSASTSKIVNYSSPVSPGVAAATSSSSSSSSSGMSSSQE. The segment covering 24 to 49 has biased composition (low complexity); sequence SSPVSPGVAAATSSSSSSSSSGMSSS. Residues 129 to 397 enclose the Protein kinase domain; that stretch reads YRHLVDLTAS…ASHIFLTPWL (269 aa). Acidic residues-rich tracts occupy residues 420-437 and 475-484; these read AEED…DEEG and PEPDTDVDMG. Disordered regions lie at residues 420-443 and 464-484; these read AEED…PLGD and MAQN…VDMG.

This sequence belongs to the protein kinase superfamily. CAMK Ser/Thr protein kinase family. Tribbles subfamily. Interacts with slbo. Interacts with Akt1. In terms of tissue distribution, expressed throughout the brain with highest levels of expression detected in the cell body rind and lower levels of expression detected in the neurophil (at protein level).

Its subcellular location is the nucleus. It is found in the cytoplasm. The protein localises to the cell cortex. Adapter protein that negatively regulates different signaling pathways to coordinate cell differentiation, proliferation, migration and growth. Functions by binding to key regulatory proteins and either blocks their activity or regulates their turnover by the proteasome. In various developing tissues functions as a cell cycle regulator that mediates cell proliferation according to the requirements of the developmental program. Acts by inducing the proteasomal degradation of the CD25 mitotic activators stg and twe at critical stages of development to delay entry into mitosis and thus mediate cell proliferation. During gastrulation, negatively regulates stg to delay mitosis in the ventral region of the embryonic mesoderm thus allowing invagination to be completed before cell division takes place. Delaying stg-dependent mitosis during bristle development and in migrating germline pole cells also arrests their cell divisions, whereas in cystocytes it promotes their cell divisions. Involved in the regulation of the mid-blastula transition; promotes the destruction of twe resulting in the cell cycle arrest in G2 of cycle 14 which delays mitosis and thus reduces cell proliferation allowing cell fate specification and morphogenesis to take place. In germline cells, blocks border cell migration during oogenesis by binding to slbo/C/EBP and promoting its ubiquitination and degradation by the proteasome. May function in a negative feedback loop with slbo to coordinate proper border cell migration. During tissue growth negatively regulates insulin signaling by binding to Akt1 and blocking its phosphorylation-dependent activation. However it may also function downstream in the insulin signaling pathway, acting with Akt1 to direct foxo degradation. Essential for the proper formation of operant place and aversive olfactory memories. In Drosophila melanogaster (Fruit fly), this protein is Tribbles.